The sequence spans 348 residues: Zinc finger and SCAN domain-containing protein 16 (348 aa).

One can recognise an SCAN box domain in the interval 41–123; sequence RQHFRKLCYQ…TVLEDLEREL (83 aa). 2 disordered regions span residues 160 to 184 and 205 to 226; these read PKKT…TKNE and RLNK…EGRS. Residues 163-184 show a composition bias toward basic and acidic residues; that stretch reads TQLEQEAGKPQRNGDKTRTKNE. 4 C2H2-type zinc fingers span residues 236–258, 264–286, 292–314, and 320–342; these read YKCD…RRTH, YKCD…HRVH, YKCK…QRIH, and YECD…QRIH.

The protein belongs to the krueppel C2H2-type zinc-finger protein family.

It is found in the nucleus. May be involved in transcriptional regulation. In Homo sapiens (Human), this protein is Zinc finger and SCAN domain-containing protein 16 (ZSCAN16).